The primary structure comprises 70 residues: MAVPKKKTSPSRRGMRRSHQALTGEAYTECSNCGELKRPHHVCGHCGHYDGREVAAAGNSGRGLKGVVRV.

The span at 1–19 shows a compositional bias: basic residues; sequence MAVPKKKTSPSRRGMRRSH. The segment at 1–21 is disordered; that stretch reads MAVPKKKTSPSRRGMRRSHQA.

The protein belongs to the bacterial ribosomal protein bL32 family.

This is Large ribosomal subunit protein bL32 from Granulibacter bethesdensis (strain ATCC BAA-1260 / CGDNIH1).